A 303-amino-acid chain; its full sequence is Acetylglutamate kinase (303 aa).

Substrate contacts are provided by residues 68 to 69 (GG), arginine 90, and asparagine 194.

The protein belongs to the acetylglutamate kinase family. ArgB subfamily.

Its subcellular location is the cytoplasm. It carries out the reaction N-acetyl-L-glutamate + ATP = N-acetyl-L-glutamyl 5-phosphate + ADP. It functions in the pathway amino-acid biosynthesis; L-arginine biosynthesis; N(2)-acetyl-L-ornithine from L-glutamate: step 2/4. Its function is as follows. Catalyzes the ATP-dependent phosphorylation of N-acetyl-L-glutamate. In Psychrobacter arcticus (strain DSM 17307 / VKM B-2377 / 273-4), this protein is Acetylglutamate kinase.